Here is a 106-residue protein sequence, read N- to C-terminus: Ribonuclease P protein component 4 (106 aa).

Residues Cys62, Cys65, Cys88, and Cys91 each contribute to the Zn(2+) site.

It belongs to the eukaryotic/archaeal RNase P protein component 4 family. As to quaternary structure, consists of a catalytic RNA component and at least 4-5 protein subunits. It depends on Zn(2+) as a cofactor.

The protein resides in the cytoplasm. The catalysed reaction is Endonucleolytic cleavage of RNA, removing 5'-extranucleotides from tRNA precursor.. In terms of biological role, part of ribonuclease P, a protein complex that generates mature tRNA molecules by cleaving their 5'-ends. The polypeptide is Ribonuclease P protein component 4 (Methanocorpusculum labreanum (strain ATCC 43576 / DSM 4855 / Z)).